The following is a 287-amino-acid chain: AA9 family lytic polysaccharide monooxygenase C (287 aa).

The first 16 residues, 1-16 (MKSVLVALATATAVSA), serve as a signal peptide directing secretion. Cu(2+) is bound at residue H17. Residue N22 is glycosylated (N-linked (GlcNAc...) asparagine). Intrachain disulfides connect C77/C230 and C200/C284. H114 contributes to the Cu(2+) binding site. O2 contacts are provided by H216 and Q225. A Cu(2+)-binding site is contributed by Y227.

The protein belongs to the polysaccharide monooxygenase AA9 family. Requires Cu(2+) as cofactor.

It is found in the secreted. It carries out the reaction [(1-&gt;4)-beta-D-glucosyl]n+m + reduced acceptor + O2 = 4-dehydro-beta-D-glucosyl-[(1-&gt;4)-beta-D-glucosyl]n-1 + [(1-&gt;4)-beta-D-glucosyl]m + acceptor + H2O.. Its function is as follows. Lytic polysaccharide monooxygenase (LPMO) that depolymerizes crystalline and amorphous polysaccharides via the oxidation of scissile alpha- or beta-(1-4)-glycosidic bonds, yielding C1 or C4 oxidation products. Catalysis by LPMOs requires the reduction of the active-site copper from Cu(II) to Cu(I) by a reducing agent and H(2)O(2) or O(2) as a cosubstrate. The sequence is that of AA9 family lytic polysaccharide monooxygenase C from Podospora anserina (strain S / ATCC MYA-4624 / DSM 980 / FGSC 10383) (Pleurage anserina).